Consider the following 151-residue polypeptide: Protein Turandot Z (151 aa).

The signal sequence occupies residues 1-23 (MSRLIHLSFVLALLACLTGPISA).

Belongs to the Turandot family.

The protein resides in the secreted. A humoral factor that may play a role in stress tolerance. This chain is Protein Turandot Z, found in Drosophila pseudoobscura pseudoobscura (Fruit fly).